The sequence spans 226 residues: ATP-dependent dethiobiotin synthetase BioD (226 aa).

12–17 (GVGKTV) lines the ATP pocket. Thr16 provides a ligand contact to Mg(2+). Residue Lys37 is part of the active site. Thr41 lines the substrate pocket. ATP contacts are provided by residues Asp49, 108–111 (EGAG), 169–170 (GS), and 197–199 (PAG). Mg(2+)-binding residues include Asp49 and Glu108.

The protein belongs to the dethiobiotin synthetase family. As to quaternary structure, homodimer. It depends on Mg(2+) as a cofactor.

The protein resides in the cytoplasm. It carries out the reaction (7R,8S)-7,8-diammoniononanoate + CO2 + ATP = (4R,5S)-dethiobiotin + ADP + phosphate + 3 H(+). The protein operates within cofactor biosynthesis; biotin biosynthesis; biotin from 7,8-diaminononanoate: step 1/2. Catalyzes a mechanistically unusual reaction, the ATP-dependent insertion of CO2 between the N7 and N8 nitrogen atoms of 7,8-diaminopelargonic acid (DAPA, also called 7,8-diammoniononanoate) to form a ureido ring. This chain is ATP-dependent dethiobiotin synthetase BioD, found in Mycobacterium bovis (strain BCG / Pasteur 1173P2).